We begin with the raw amino-acid sequence, 872 residues long: C-mannosyltransferase dpy-19 homolog (872 aa).

Helical transmembrane passes span 4–24 (PNLYVILSHALIGCGFFFLYV), 126–146 (FVWLMGGVTLLVLYLYGTLLS), 149–169 (IFGGIYGVISYLMFHSFVAKI), 179–199 (FAFPFIFLQMFYLCICIGRII), 211–231 (IFAMSLFTACALLSWQFSTFI), 257–277 (VLDYSLSHLLGHALAFVMSHG), 279–299 (SQLLLTWQLSISLFLFLITMV), 326–346 (FLMLTLLLASSVQTTLIELFN), and 399–419 (VKTMIVKPYCMYGVVMLAMFF). The stretch at 508–535 (KRLRAQINRNSVKQRKERAQETKEAATD) forms a coiled coil. The disordered stretch occupies residues 514 to 620 (INRNSVKQRK…RSSSRRSSVV (107 aa)). The span at 524–533 (ERAQETKEAA) shows a compositional bias: basic and acidic residues. Over residues 541–551 (TEEEDKDPEAE) the composition is skewed to acidic residues. 2 helical membrane passes run 627–647 (ILNMHYVYSFLQMLVFTLIGL) and 678–698 (NIFWSVSLAVFLLSMFDPGMV).

This sequence belongs to the dpy-19 family.

The protein localises to the membrane. Its function is as follows. Probable C-mannosyltransferase that mediates C-mannosylation of tryptophan residues on target proteins. The sequence is that of C-mannosyltransferase dpy-19 homolog from Drosophila melanogaster (Fruit fly).